A 124-amino-acid polypeptide reads, in one-letter code: Small ribosomal subunit protein uS12 (124 aa).

A disordered region spans residues 1 to 22; that stretch reads MATVNQLVRKPRKRKVAKSDVP. Asp89 carries the post-translational modification 3-methylthioaspartic acid. The interval 99-124 is disordered; that stretch reads RGSLDTSGVQNRKQGRSKYGTKRPKK. Residues 111-124 show a composition bias toward basic residues; that stretch reads KQGRSKYGTKRPKK.

This sequence belongs to the universal ribosomal protein uS12 family. In terms of assembly, part of the 30S ribosomal subunit. Contacts proteins S8 and S17. May interact with IF1 in the 30S initiation complex.

Functionally, with S4 and S5 plays an important role in translational accuracy. In terms of biological role, interacts with and stabilizes bases of the 16S rRNA that are involved in tRNA selection in the A site and with the mRNA backbone. Located at the interface of the 30S and 50S subunits, it traverses the body of the 30S subunit contacting proteins on the other side and probably holding the rRNA structure together. The combined cluster of proteins S8, S12 and S17 appears to hold together the shoulder and platform of the 30S subunit. The polypeptide is Small ribosomal subunit protein uS12 (Marinomonas sp. (strain MWYL1)).